Consider the following 348-residue polypeptide: Inosamine-phosphate amidinotransferase 1 (348 aa).

Active-site residues include D179 and H227. C332 (amidino-cysteine intermediate) is an active-site residue.

This sequence belongs to the amidinotransferase family. As to quaternary structure, homodimer.

It catalyses the reaction 1-amino-1-deoxy-scyllo-inositol 4-phosphate + L-arginine = 1-guanidino-1-deoxy-scyllo-inositol 4-phosphate + L-ornithine. Its pathway is antibiotic biosynthesis; streptomycin biosynthesis. In terms of biological role, catalyzes two non-consecutive transamidination reactions. It converts scyllo-inosamine 4-phosphate into N-amidino-scyllo-inosamine 4-phosphate and N1-amidinostreptamine 6-phosphate into streptidine 6-phosphate. In Streptomyces glaucescens, this protein is Inosamine-phosphate amidinotransferase 1 (strB1).